We begin with the raw amino-acid sequence, 663 residues long: UvrABC system protein B (663 aa).

Over residues 1–10 the composition is skewed to basic and acidic residues; the sequence is MIDKRDDKPF. A disordered region spans residues 1 to 23; that stretch reads MIDKRDDKPFKLKSKYKPSGDQP. In terms of domain architecture, Helicase ATP-binding spans 31 to 418; that stretch reads DNIEGGEKAQ…TNTIIEQIIR (388 aa). Residue 44–51 participates in ATP binding; that stretch reads GATGTGKT. The Beta-hairpin motif lies at 97–120; that stretch reads YYDYYQPEAYVPSSDTYIEKDSSV. One can recognise a Helicase C-terminal domain in the interval 435-601; sequence QMDDLLGEIN…TIKKDIRGLI (167 aa). A UVR domain is found at 627–662; sequence KEAINALQKQMQEAAELLDFELAAQMRDLILELKLM.

It belongs to the UvrB family. As to quaternary structure, forms a heterotetramer with UvrA during the search for lesions. Interacts with UvrC in an incision complex.

It localises to the cytoplasm. Functionally, the UvrABC repair system catalyzes the recognition and processing of DNA lesions. A damage recognition complex composed of 2 UvrA and 2 UvrB subunits scans DNA for abnormalities. Upon binding of the UvrA(2)B(2) complex to a putative damaged site, the DNA wraps around one UvrB monomer. DNA wrap is dependent on ATP binding by UvrB and probably causes local melting of the DNA helix, facilitating insertion of UvrB beta-hairpin between the DNA strands. Then UvrB probes one DNA strand for the presence of a lesion. If a lesion is found the UvrA subunits dissociate and the UvrB-DNA preincision complex is formed. This complex is subsequently bound by UvrC and the second UvrB is released. If no lesion is found, the DNA wraps around the other UvrB subunit that will check the other stand for damage. This is UvrABC system protein B from Streptococcus pyogenes serotype M1.